The chain runs to 1402 residues: Nuclear pore complex protein Nup160 (1402 aa).

A phosphoserine mark is found at Ser10, Ser456, Ser915, and Ser1123.

In terms of assembly, part of the nuclear pore complex (NPC). Forms part of the NUP160 subcomplex in the nuclear pore which is composed of NUP160, NUP133, NUP107 and NUP96. This complex plays a role in RNA export and in tethering NUP98 and NUP153 to the nucleus.

Its subcellular location is the nucleus. It localises to the nuclear pore complex. Functions as a component of the nuclear pore complex (NPC). Involved in poly(A)+ RNA transport. This Mus musculus (Mouse) protein is Nuclear pore complex protein Nup160 (Nup160).